Reading from the N-terminus, the 95-residue chain is UPF0358 protein BCE_3996 (95 aa).

Belongs to the UPF0358 family.

This chain is UPF0358 protein BCE_3996, found in Bacillus cereus (strain ATCC 10987 / NRS 248).